Reading from the N-terminus, the 197-residue chain is Zinc finger protein 581 (197 aa).

Positions Met1 to Gln10 are enriched in pro residues. Residues Met1 to His52 are disordered. Residues Pro35–Ala44 show a composition bias toward low complexity. 4 consecutive C2H2-type zinc fingers follow at residues Tyr87 to His109, Phe115 to His137, His145 to His167, and Phe173 to His196.

The protein localises to the nucleus. Its function is as follows. May be involved in transcriptional regulation. In Homo sapiens (Human), this protein is Zinc finger protein 581 (ZNF581).